Consider the following 195-residue polypeptide: Imidazoleglycerol-phosphate dehydratase (195 aa).

The protein belongs to the imidazoleglycerol-phosphate dehydratase family.

It localises to the cytoplasm. It carries out the reaction D-erythro-1-(imidazol-4-yl)glycerol 3-phosphate = 3-(imidazol-4-yl)-2-oxopropyl phosphate + H2O. The protein operates within amino-acid biosynthesis; L-histidine biosynthesis; L-histidine from 5-phospho-alpha-D-ribose 1-diphosphate: step 6/9. The chain is Imidazoleglycerol-phosphate dehydratase from Paraburkholderia xenovorans (strain LB400).